We begin with the raw amino-acid sequence, 679 residues long: Methionine--tRNA ligase (679 aa).

Positions 15–25 match the 'HIGH' region motif; the sequence is PYANGPIHLGH. The Zn(2+) site is built by cysteine 146, cysteine 149, cysteine 159, and cysteine 162. Residues 332-336 carry the 'KMSKS' region motif; that stretch reads KMSKS. Lysine 335 contacts ATP. One can recognise a tRNA-binding domain in the interval 578–679; that stretch reads DFAKIDLRIA…EGAQPGMKVK (102 aa).

It belongs to the class-I aminoacyl-tRNA synthetase family. MetG type 1 subfamily. Homodimer. It depends on Zn(2+) as a cofactor.

It localises to the cytoplasm. The enzyme catalyses tRNA(Met) + L-methionine + ATP = L-methionyl-tRNA(Met) + AMP + diphosphate. Is required not only for elongation of protein synthesis but also for the initiation of all mRNA translation through initiator tRNA(fMet) aminoacylation. This Shewanella halifaxensis (strain HAW-EB4) protein is Methionine--tRNA ligase.